The sequence spans 303 residues: Recombination-associated protein RdgC (303 aa).

Belongs to the RdgC family.

It is found in the cytoplasm. The protein localises to the nucleoid. May be involved in recombination. In Edwardsiella ictaluri (strain 93-146), this protein is Recombination-associated protein RdgC.